The sequence spans 718 residues: Mitotic spindle assembly checkpoint protein MAD1 (718 aa).

M1 is modified (N-acetylmethionine). Residue S16 is modified to Phosphoserine. Residues 46–632 (QQSMQLEERA…QTKIQEFRKA (587 aa)) are a coiled coil. Residue K61 is modified to N6-acetyllysine; alternate. A Glycyl lysine isopeptide (Lys-Gly) (interchain with G-Cter in SUMO2); alternate cross-link involves residue K61. The short motif at 79–82 (KRAR) is the Nuclear localization signal element. S214 is subject to Phosphoserine. Residues 301 to 340 (VGLELENERLLAKLQSWERLDQTMGLSIRTPEDLSRFVVE) form an important for interaction with IK region. A necessary for interaction with NEK2 region spans residues 380 to 532 (LLEERKKRET…EAQLERRALQ (153 aa)). S428 carries the phosphoserine modification. The segment at 439-480 (EDMVQKVHSHSAEMEAQLSQALEELGGQKQRADMLEMELKML) is important for interaction with IK. Residues 540–551 (TKVLHMSLNPTS) form a necessary for interaction with MAD2L1 region. Phosphoserine is present on residues S598 and S610. The residue at position 634 (Y634) is a Phosphotyrosine. T716 is modified (phosphothreonine).

The protein belongs to the MAD1 family. In terms of assembly, homodimer. Dimerizes via its N- and C- terminal regions. Heterodimerizes with MAD2L1 in order to form a tetrameric MAD1L1-MAD2L1 core complex. Interacts with the closed conformation form of MAD2L1 (C-MAD2) and open conformation form of MAD2L1 (O-MAD2). It is unclear whether MAD1L1 dimerization promotes the conversion of closed to open conformation of MAD2L1. Formation of a heterotetrameric core complex containing two molecules each of MAD1L1 and of MAD2L1 promotes binding of another molecule of MAD2L1 to each MAD2L1, resulting in a heterohexamer. Perturbation of the original MAD1L1-MAD2L1 structure by the spindle checkpoint may decrease MAD2L1 affinity for MAD1L1. CDC20 can compete with MAD1L1 for MAD2L1 binding, until the attachment and/or tension dampen the checkpoint signal, preventing further release of MAD2L1 on to CDC20. Also able to interact with the BUB1/BUB3 complex. Interacts with NEK2. Interacts with TTK. Interacts with TPR; the interactions occurs in a microtubule-independent manner. Interacts with IK. Interacts with the viral Tax protein. Interacts with PRAP1. As to quaternary structure, interacts with MAD2L1; this interaction leads to the cytoplasmic sequestration of MAD2L1. Interacts with PRAP1. Post-translationally, phosphorylated; by BUB1. Become hyperphosphorylated in late S through M phases or after mitotic spindle damage. Phosphorylated; by TTK. In terms of tissue distribution, expressed in hepatocellular carcinomas and hepatoma cell lines (at protein level).

It is found in the nucleus. Its subcellular location is the chromosome. The protein resides in the centromere. The protein localises to the kinetochore. It localises to the nucleus envelope. It is found in the cytoplasm. Its subcellular location is the cytoskeleton. The protein resides in the microtubule organizing center. The protein localises to the centrosome. It localises to the spindle. It is found in the spindle pole. Its function is as follows. Component of the spindle-assembly checkpoint that prevents the onset of anaphase until all chromosomes are properly aligned at the metaphase plate. Forms a heterotetrameric complex with the closed conformation form of MAD2L1 (C-MAD2) at unattached kinetochores during prometaphase, recruits an open conformation of MAD2L1 (O-MAD2) and promotes the conversion of O-MAD2 to C-MAD2, which ensures mitotic checkpoint signaling. In terms of biological role, sequesters MAD2L1 in the cytoplasm preventing its function as an activator of the mitotic spindle assembly checkpoint (SAC) resulting in SAC impairment and chromosomal instability in hepatocellular carcinomas. This is Mitotic spindle assembly checkpoint protein MAD1 (MAD1L1) from Homo sapiens (Human).